We begin with the raw amino-acid sequence, 206 residues long: Thymidylate kinase (206 aa).

Position 14–21 (14–21 (GGEGIGKS)) interacts with ATP.

Belongs to the thymidylate kinase family.

It catalyses the reaction dTMP + ATP = dTDP + ADP. In terms of biological role, phosphorylation of dTMP to form dTDP in both de novo and salvage pathways of dTTP synthesis. In Rickettsia bellii (strain OSU 85-389), this protein is Thymidylate kinase.